The primary structure comprises 120 residues: Holo-[acyl-carrier-protein] synthase (120 aa).

2 residues coordinate Mg(2+): Asp-8 and Glu-58.

This sequence belongs to the P-Pant transferase superfamily. AcpS family. The cofactor is Mg(2+).

It is found in the cytoplasm. The catalysed reaction is apo-[ACP] + CoA = holo-[ACP] + adenosine 3',5'-bisphosphate + H(+). Its function is as follows. Transfers the 4'-phosphopantetheine moiety from coenzyme A to a Ser of acyl-carrier-protein. In Streptococcus sanguinis (strain SK36), this protein is Holo-[acyl-carrier-protein] synthase.